A 134-amino-acid polypeptide reads, in one-letter code: 6,7-dimethyl-8-ribityllumazine synthase (134 aa).

5-amino-6-(D-ribitylamino)uracil contacts are provided by residues Phe-12, 44–46, and 68–70; these read VFD and SVI. Residue 73-74 participates in (2S)-2-hydroxy-3-oxobutyl phosphate binding; that stretch reads ET. The active-site Proton donor is His-76. Leu-101 is a 5-amino-6-(D-ribitylamino)uracil binding site. Arg-116 serves as a coordination point for (2S)-2-hydroxy-3-oxobutyl phosphate.

Belongs to the DMRL synthase family.

The catalysed reaction is (2S)-2-hydroxy-3-oxobutyl phosphate + 5-amino-6-(D-ribitylamino)uracil = 6,7-dimethyl-8-(1-D-ribityl)lumazine + phosphate + 2 H2O + H(+). Its pathway is cofactor biosynthesis; riboflavin biosynthesis; riboflavin from 2-hydroxy-3-oxobutyl phosphate and 5-amino-6-(D-ribitylamino)uracil: step 1/2. In terms of biological role, catalyzes the formation of 6,7-dimethyl-8-ribityllumazine by condensation of 5-amino-6-(D-ribitylamino)uracil with 3,4-dihydroxy-2-butanone 4-phosphate. This is the penultimate step in the biosynthesis of riboflavin. The polypeptide is 6,7-dimethyl-8-ribityllumazine synthase (Methanosarcina mazei (strain ATCC BAA-159 / DSM 3647 / Goe1 / Go1 / JCM 11833 / OCM 88) (Methanosarcina frisia)).